Consider the following 469-residue polypeptide: Ufm1-specific protease 2 (469 aa).

An N-acetylmethionine modification is found at Met-1. Catalysis depends on residues Cys-302, Asp-426, and His-428.

Belongs to the peptidase C78 family. As to expression, expressed in brain.

The protein resides in the endoplasmic reticulum. Its subcellular location is the cytoplasm. It localises to the nucleus. In terms of biological role, thiol-dependent isopeptidase that specifically cleaves UFM1, a ubiquitin-like modifier protein, from conjugated proteins, such as CD274/PD-L1, CYB5R3, DDRGK1, MRE11, RPL26/uL24, TRIP4 and RPL26/uL24. While it is also able to mediate the processing of UFM1 precursors, a prerequisite for conjugation reactions, UFSP2 mainly acts as a protein deUFMylase that mediates deconjugation of UFM1 from target proteins. Mediates deUFMylation of RPL26/uL24, a critical step to release the UFM1 ribosome E3 ligase (UREL) complex during the recycling of 60S ribosome subunits from the endoplasmic reticulum. Catalyzes deUFMylation of TRIP4, regulating intracellular nuclear receptors transactivation and thereby regulate cell proliferation and differentiation. This chain is Ufm1-specific protease 2, found in Homo sapiens (Human).